The sequence spans 194 residues: Large ribosomal subunit protein eL15 (194 aa).

Residues 168–194 (RSRGLLNKGKGAEKVRPSIRAHQGKGK) are disordered. The segment covering 184 to 194 (PSIRAHQGKGK) has biased composition (basic residues).

It belongs to the eukaryotic ribosomal protein eL15 family. As to quaternary structure, part of the 50S ribosomal subunit.

This chain is Large ribosomal subunit protein eL15, found in Thermococcus kodakarensis (strain ATCC BAA-918 / JCM 12380 / KOD1) (Pyrococcus kodakaraensis (strain KOD1)).